Consider the following 220-residue polypeptide: Antistasin (220 aa).

The signal sequence occupies residues 1 to 19 (MNYLFVFLALSAAVTFANA). Antistasin-like domains are found at residues 21-46 (CNKI…ICKC), 54-79 (CSNR…ICRC), 91-117 (CDGL…KCEC), 120-145 (CKQF…TCKC), 154-180 (CDDL…KCEC), and 183-208 (CKNF…TCKC).

It belongs to the protease inhibitor I15 (antistasin) family. Gland cells. It is more strongly expressed in the head than in the gastric tissue.

It is found in the secreted. This highly disulfide-bonded protein is a potent inhibitor of factor Xa. Facilitates digestion of tissues and may also protect the gastric tissues from its own digestive enzymes. May have therapeutic utility as an anticoagulant. Also exhibits a strong metastatic activity. The protein is Antistasin of Hydra vulgaris (Hydra).